The chain runs to 90 residues: ESAT-6-like protein EsxE (90 aa).

The protein belongs to the WXG100 family. ESAT-6 subfamily.

It is found in the secreted. The protein is ESAT-6-like protein EsxE of Mycobacterium tuberculosis (strain CDC 1551 / Oshkosh).